The following is a 210-amino-acid chain: GEM-like protein 7 (210 aa).

The 79-residue stretch at 88–166 (KIYKRLFKVC…CKINGVNQSQ (79 aa)) folds into the GRAM domain.

This sequence belongs to the GEM family.

The polypeptide is GEM-like protein 7 (Arabidopsis thaliana (Mouse-ear cress)).